Here is a 518-residue protein sequence, read N- to C-terminus: Probable cytochrome P450 317a1 (518 aa).

Cys-461 contributes to the heme binding site.

This sequence belongs to the cytochrome P450 family. It depends on heme as a cofactor.

The protein localises to the endoplasmic reticulum membrane. It is found in the microsome membrane. In terms of biological role, may be involved in the metabolism of insect hormones and in the breakdown of synthetic insecticides. This Drosophila melanogaster (Fruit fly) protein is Probable cytochrome P450 317a1 (Cyp317a1).